The following is a 585-amino-acid chain: SLAIN motif-containing protein-like (585 aa).

Disordered regions lie at residues 1 to 34 (MVVPDSGSDIQPADNGDTDKVMSNSEPELDPNLT), 55 to 125 (NQTL…RVEE), 324 to 365 (QDYA…EDEC), 402 to 476 (PRLS…SDGQ), and 492 to 585 (GSMS…DGCY). Polar residues predominate over residues 68 to 83 (GGTNNSNLKAGSNINN). The span at 327-345 (ASTSASRRSSSASLQSLRR) shows a compositional bias: low complexity. Residues 351 to 365 (QEFDSYSQEDEEDEC) show a composition bias toward acidic residues. 3 stretches are compositionally biased toward polar residues: residues 425 to 434 (PNLTPRTSLR), 441 to 476 (NSRSMEANLQSSGNRTSCLPHSPKGASSSRMRSDGQ), and 549 to 563 (ASPSSRTRLPQTPRS). Residues 575–585 (LTDESWKDGCY) show a composition bias toward basic and acidic residues.

It belongs to the SLAIN motif-containing family.

The chain is SLAIN motif-containing protein-like from Danio rerio (Zebrafish).